We begin with the raw amino-acid sequence, 367 residues long: MKETRDLLFYNENSIDFNFSPEEMDTHQMMCVNNDSQQDTSFLTATTCIFDFQKDIYDDQNLMSFDPFFPQQRDMALWIASVGNGAIDWSTKPQLTLSKKIPDVVNEKGEEITPADLQRHYADKHVAKLPDHSCDLYYLLFKHAKFEATTLRIPLSLLNDNGTGALGPFDEIRSLTDEEQRLLTLLKTISHYSWVTKHATKDCTGQLLDLCKEGLQLVESIQVNKTFNGVILHILVAYFGRRSTALRDEFQLHKLFLEQRLDIELEILAQHGGADAIDSEKLRKVKKLSELWEWFNAIPYNHHPSVSQIEFIASQIGEKVSFVKSWVANKRRTGAKKRSKKPAPSTQIRPALKVFLEKKPFVSRQVV.

Positions 273 to 338 (GADAIDSEKL…NKRRTGAKKR (66 aa)) form a DNA-binding region, homeobox; TALE-type.

The protein belongs to the TALE/M-ATYP homeobox family. Forms a heterodimer with A1.

It localises to the nucleus. Its function is as follows. Mating type proteins are sequence specific DNA-binding proteins that act as master switches in yeast differentiation by controlling gene expression in a cell type-specific fashion. Transcriptional corepressor that acts in conjunction with A1 to repress transcription of haploid-specific genes. The protein is Mating-type protein ALPHA2 (MATB2) of Yarrowia lipolytica (strain CLIB 122 / E 150) (Yeast).